The following is a 296-amino-acid chain: Homoserine kinase (296 aa).

84–94 (PLARGLGSSSS) provides a ligand contact to ATP.

The protein belongs to the GHMP kinase family. Homoserine kinase subfamily.

It is found in the cytoplasm. The catalysed reaction is L-homoserine + ATP = O-phospho-L-homoserine + ADP + H(+). Its pathway is amino-acid biosynthesis; L-threonine biosynthesis; L-threonine from L-aspartate: step 4/5. Catalyzes the ATP-dependent phosphorylation of L-homoserine to L-homoserine phosphate. This Lactococcus lactis subsp. lactis (strain IL1403) (Streptococcus lactis) protein is Homoserine kinase.